A 351-amino-acid chain; its full sequence is Cytochrome c biogenesis protein CcsA (351 aa).

Helical transmembrane passes span 17-37, 38-58, 68-88, 97-117, 143-163, 259-279, 286-306, and 320-340; these read VLFL…LPAI, NALG…LLGA, LSNL…VHLI, LVGV…TLTL, MMLS…FLVI, IIGL…VWAN, WSWD…AAYL, and AILA…VNLL.

This sequence belongs to the CcmF/CycK/Ccl1/NrfE/CcsA family. May interact with ccs1.

It is found in the cellular thylakoid membrane. In terms of biological role, required during biogenesis of c-type cytochromes (cytochrome c6 and cytochrome f) at the step of heme attachment. The sequence is that of Cytochrome c biogenesis protein CcsA from Nostoc sp. (strain PCC 7120 / SAG 25.82 / UTEX 2576).